The sequence spans 402 residues: NADH-quinone oxidoreductase subunit D (402 aa).

It belongs to the complex I 49 kDa subunit family. In terms of assembly, NDH-1 is composed of 14 different subunits. Subunits NuoB, C, D, E, F, and G constitute the peripheral sector of the complex.

The protein localises to the cell inner membrane. The enzyme catalyses a quinone + NADH + 5 H(+)(in) = a quinol + NAD(+) + 4 H(+)(out). In terms of biological role, NDH-1 shuttles electrons from NADH, via FMN and iron-sulfur (Fe-S) centers, to quinones in the respiratory chain. The immediate electron acceptor for the enzyme in this species is believed to be ubiquinone. Couples the redox reaction to proton translocation (for every two electrons transferred, four hydrogen ions are translocated across the cytoplasmic membrane), and thus conserves the redox energy in a proton gradient. This is NADH-quinone oxidoreductase subunit D from Cereibacter sphaeroides (strain ATCC 17025 / ATH 2.4.3) (Rhodobacter sphaeroides).